A 327-amino-acid polypeptide reads, in one-letter code: Probable serine/threonine-protein kinase WNK5 (327 aa).

Residues 1–48 (MPPNPTPPRRATTTTTRATSGVRRGEEEQGGMAVSASAGEEEEAFEEV) are disordered. Positions 9–19 (RRATTTTTRAT) are enriched in low complexity. The span at 39–48 (GEEEEAFEEV) shows a compositional bias: acidic residues. The region spanning 55-314 (GRYADVLGLG…AAELLRDPFF (260 aa)) is the Protein kinase domain. 136-139 (TEVC) lines the ATP pocket. The active-site Proton acceptor is the Asp-203.

Belongs to the protein kinase superfamily. Ser/Thr protein kinase family. WNK subfamily.

The catalysed reaction is L-seryl-[protein] + ATP = O-phospho-L-seryl-[protein] + ADP + H(+). It carries out the reaction L-threonyl-[protein] + ATP = O-phospho-L-threonyl-[protein] + ADP + H(+). The polypeptide is Probable serine/threonine-protein kinase WNK5 (WNK5) (Oryza sativa subsp. japonica (Rice)).